We begin with the raw amino-acid sequence, 249 residues long: Segregation and condensation protein A (249 aa).

The protein belongs to the ScpA family. In terms of assembly, component of a cohesin-like complex composed of ScpA, ScpB and the Smc homodimer, in which ScpA and ScpB bind to the head domain of Smc. The presence of the three proteins is required for the association of the complex with DNA.

The protein localises to the cytoplasm. Participates in chromosomal partition during cell division. May act via the formation of a condensin-like complex containing Smc and ScpB that pull DNA away from mid-cell into both cell halves. The polypeptide is Segregation and condensation protein A (Listeria monocytogenes serotype 4a (strain HCC23)).